A 498-amino-acid polypeptide reads, in one-letter code: Cytoskeletal signaling protein slm1 (498 aa).

Residues 1–23 (MELSGKSEFPTRTEIPNQASNGD) form a disordered region. Phosphoserine is present on residues Ser-175 and Ser-312. Residues 300-405 (VPIMAGYLIR…WWEALNTHIA (106 aa)) form the PH domain. Residues 416-475 (ANGPSAVSDSDDDDDDPNDFRPAVERQSSTMNTRMSQPSSAVNTNRSYGSEQIPSYADSQ) form a disordered region. Polar residues predominate over residues 441–475 (RQSSTMNTRMSQPSSAVNTNRSYGSEQIPSYADSQ).

The protein resides in the cell tip. In terms of biological role, effector of the TORC2- and calcineurin-signaling pathways. Mediates actin polarization via inhibition of calcineurin-dependent transcription. May play a role in the response to the disruption of sphingolipid synthesis, where dephosphorylation of slm1 leads to the activation and phosphorylation of ypk1 through the TORC2 and PKH1 pathways, which in turn phosphorylates orm1 and lag1 to activate sphingolipid synthesis. This Schizosaccharomyces pombe (strain 972 / ATCC 24843) (Fission yeast) protein is Cytoskeletal signaling protein slm1 (slm1).